A 103-amino-acid polypeptide reads, in one-letter code: Small ribosomal subunit protein uS10 (103 aa).

Belongs to the universal ribosomal protein uS10 family. In terms of assembly, part of the 30S ribosomal subunit.

In terms of biological role, involved in the binding of tRNA to the ribosomes. In Actinobacillus pleuropneumoniae serotype 5b (strain L20), this protein is Small ribosomal subunit protein uS10.